The primary structure comprises 273 residues: 2,3,4,5-tetrahydropyridine-2,6-dicarboxylate N-succinyltransferase (273 aa).

Positions 104 and 141 each coordinate substrate.

Belongs to the transferase hexapeptide repeat family. In terms of assembly, homotrimer.

It is found in the cytoplasm. The catalysed reaction is (S)-2,3,4,5-tetrahydrodipicolinate + succinyl-CoA + H2O = (S)-2-succinylamino-6-oxoheptanedioate + CoA. It functions in the pathway amino-acid biosynthesis; L-lysine biosynthesis via DAP pathway; LL-2,6-diaminopimelate from (S)-tetrahydrodipicolinate (succinylase route): step 1/3. The polypeptide is 2,3,4,5-tetrahydropyridine-2,6-dicarboxylate N-succinyltransferase (Acinetobacter baylyi (strain ATCC 33305 / BD413 / ADP1)).